A 432-amino-acid chain; its full sequence is MVNEQIIDISGPLKGEIEVPGDKSMTHRAIMLASLAEGVSTIYKPLLGEDCRRTMDIFRLLGVEIKEDDEKLVVTSPGYQSFNTPHQVLYTGNSGTTTRLLAGLLSGLGIESVLSGDVSIGKRPMDRVLRPLKLMDANIEGIEDNYTPLIIKPSVIKGINYQMEVASAQVKSAILFASLFSKEPTIIKELDVSRNHTETMFKHFNIPIEAEGLSINTTPEAIRYIKPADFHVPGDISSAAFFIVAALITPGSDVTIHNVGINPTRSGIIDIVEKMGGNIQLFNQTTGAEPTASIRIQYTPMLQPITIEGELVPKAIDELPVIALLCTQAVGTSTIKDAEELKVKETNRIDTTADMLNLLGFELQPTNDGLIIHPSEFKTNATVDSLTDHRIGMMLAVASLLSSEPVKIKQFDAVNVSFPGFLPKLKLLENEG.

Lys-23, Ser-24, and Arg-28 together coordinate 3-phosphoshikimate. Lys-23 lines the phosphoenolpyruvate pocket. Residues Gly-95 and Arg-123 each coordinate phosphoenolpyruvate. 3-phosphoshikimate-binding residues include Ser-167, Gln-169, Asp-317, and Lys-344. Gln-169 lines the phosphoenolpyruvate pocket. Asp-317 functions as the Proton acceptor in the catalytic mechanism. Phosphoenolpyruvate contacts are provided by Arg-348 and Arg-390.

Belongs to the EPSP synthase family. Monomer.

The protein resides in the cytoplasm. The catalysed reaction is 3-phosphoshikimate + phosphoenolpyruvate = 5-O-(1-carboxyvinyl)-3-phosphoshikimate + phosphate. Its pathway is metabolic intermediate biosynthesis; chorismate biosynthesis; chorismate from D-erythrose 4-phosphate and phosphoenolpyruvate: step 6/7. Its function is as follows. Catalyzes the transfer of the enolpyruvyl moiety of phosphoenolpyruvate (PEP) to the 5-hydroxyl of shikimate-3-phosphate (S3P) to produce enolpyruvyl shikimate-3-phosphate and inorganic phosphate. In Staphylococcus aureus (strain Newman), this protein is 3-phosphoshikimate 1-carboxyvinyltransferase.